Consider the following 94-residue polypeptide: Small ribosomal subunit protein bS18 (94 aa).

Low complexity predominate over residues 1–12 (MSEQNSRPQNSE). The disordered stretch occupies residues 1–29 (MSEQNSRPQNSERPQRSRRPQGGPRRRRK). The span at 16–29 (RSRRPQGGPRRRRK) shows a compositional bias: basic residues.

It belongs to the bacterial ribosomal protein bS18 family. Part of the 30S ribosomal subunit. Forms a tight heterodimer with protein bS6.

In terms of biological role, binds as a heterodimer with protein bS6 to the central domain of the 16S rRNA, where it helps stabilize the platform of the 30S subunit. This Leuconostoc citreum (strain KM20) protein is Small ribosomal subunit protein bS18.